A 1481-amino-acid polypeptide reads, in one-letter code: DNA excision repair protein ERCC-6 (1481 aa).

The tract at residues 1-506 (MFHEEVPNST…GFLFKKLFKY (506 aa)) is N-terminal domain; essential for its chromatin remodeling activity. The residue at position 158 (serine 158) is a Phosphoserine; by CDK2. Lysine 170 carries the post-translational modification N6-methylated lysine; by EHMT2. A Glycyl lysine isopeptide (Lys-Gly) (interchain with G-Cter in SUMO2) cross-link involves residue lysine 256. Lysine 298 bears the N6-methylated lysine; by EHMT2 mark. The segment at 309–452 (AIETKADQRS…RKVARRQDDG (144 aa)) is disordered. A compositionally biased stretch (basic residues) spans 327–337 (RLKKHSRKLQR). Over residues 353 to 363 (KPLEPEVRPEA) the composition is skewed to basic and acidic residues. Composition is skewed to acidic residues over residues 378–390 (DGEEEEEQEEEEG) and 420–435 (EIDDDFFPSSEEEDEA). 2 positions are modified to phosphoserine: serine 428 and serine 429. An N6-methylated lysine; by EHMT2 modification is found at lysine 444. Serine 482 and serine 485 each carry phosphoserine. The Helicase ATP-binding domain maps to 515-691 (WELHCQQAGG…WSLFDFIFPG (177 aa)). 528–535 (DEMGLGKT) serves as a coordination point for ATP. The DEAH box signature appears at 642-645 (DEGH). Residues 839-998 (VVESLLKIWH…RRFFKSNDLY (160 aa)) form the Helicase C-terminal domain. 3 disordered regions span residues 1040-1096 (LGTD…NRAS), 1114-1238 (SVMS…DRSS), and 1307-1372 (GHRG…GAPS). The residue at position 1047 (lysine 1047) is an N6-methylated lysine; by EHMT2. Residues 1138-1147 (ASTSEKQGSS) are compositionally biased toward polar residues. Residues 1192–1201 (QPKQKAKNSK) show a composition bias toward basic residues. The segment covering 1202-1212 (HCRDAKFEGTR) has biased composition (basic and acidic residues). Residues 1330–1345 (LPVQHPSSLTEKTQNN) show a composition bias toward polar residues. Residues 1346-1364 (MKKEGKAHTPEHFSGKEDG) are compositionally biased toward basic and acidic residues. Positions 1373–1385 (SSSLLARMRARNH) match the CSA-interacting motif (CIM) motif. Positions 1387–1416 (ILPERLESDSEHLAEAAAVPPCGTEHDDLL) are ubiquitin-binding domain (UBD). Residues 1417 to 1481 (VDMRNFIAFQ…GIWKLKPEYC (65 aa)) form a winged-helix domain (WHD) region. The segment at 1434–1481 (STQEILQEFESKLSVAQSCVFRELLRNLCNFHRTPGGEGIWKLKPEYC) is essential for its interaction with RNA polymerase II, transcription-coupled nucleotide excision repair activity, association with chromatin after UV irradiation and for mediating the UV-induced translocation of ERRC8 to the nuclear matrix.

This sequence belongs to the SNF2/RAD54 helicase family. As to quaternary structure, homodimer. Binds DNA. Interacts with ERCC8. Interacts with RNA polymerase II; interaction is enhanced by UV irradiation. Component of the B-WICH complex, at least composed of SMARCA5/SNF2H, BAZ1B/WSTF, SF3B1, DEK, MYO1C, ERCC6, MYBBP1A and DDX21. Interacts with KIAA1530/UVSSA. Interacts with ELOA and CUL5; the interaction is induced by DNA damaging agents or by inhibitors of RNA polymerase II elongation. Interacts (via WHD region) with RIF1. Interacts with SMARCC2/BAF170, SMARCB1/BAF47 and the neuron-specific chromatin remodeling complex (nBAF complex). Interacts with ERCC5/XPG (via C-terminus); the interaction stimulates ERCC6/CSB binding to DNA repair bubble and ERCC6/CSB ATPase activity. May form a complex composed of RNA polymerase II, ERCC6/CSB and ERCC5/XPG which associates with the DNA repair bubble during transcription-coupled nucleotide excision repair. Interacts with CAND1, CSTF1, DDX3X, DDX5, DDX17, DDX23, DHX36, HDAC1, HNRNPU, MTA2, PRPF3, PSMD3, RBBP4, SFPQ, SMARCA1, SMARCA2, TOP1, USP7 and XRCC5. Phosphorylated in a cell cycle-dependent manner at Ser-158 by cyclin A-CDK2 in response to DNA damage. Phosphorylation at this site promotes the intramolecular interaction of the N-terminal domain with the helicase ATP-binding domain, thereby probably releasing the inhibitory effect of the N-terminal domain on its ATPase activity. Phosphorylation is essential for its chromatin remodeling activity. Post-translationally, ubiquitinated at the C-terminus. Ubiquitination by the CSA complex leads to ERCC6 proteasomal degradation in a UV-dependent manner. Stabilized following interaction with KIAA1530/UVSSA, which promotes recruitment of deubiquitinating enzyme USP7, leading to deubiquitination of ERCC6 thereby preventing UV-induced degradation of ERCC6 by the proteasome.

The protein localises to the nucleus. Its subcellular location is the chromosome. The enzyme catalyses ATP + H2O = ADP + phosphate + H(+). Its function is as follows. Essential factor involved in transcription-coupled nucleotide excision repair (TC-NER), a process during which RNA polymerase II-blocking lesions are rapidly removed from the transcribed strand of active genes. Plays a central role in the initiation of the TC-NER process: specifically recognizes and binds RNA polymerase II stalled at a lesion, and mediates recruitment of ERCC8/CSA, initiating DNA damage excision by TFIIH recruitment. Upon DNA-binding, it locally modifies DNA conformation by wrapping the DNA around itself, thereby modifying the interface between stalled RNA polymerase II and DNA. Acts as a chromatin remodeler at DSBs; DNA-dependent ATPase-dependent activity is essential for this function. Plays an important role in regulating the choice of the DNA double-strand breaks (DSBs) repair pathway and G2/M checkpoint activation; DNA-dependent ATPase activity is essential for this function. Regulates the DNA repair pathway choice by inhibiting non-homologous end joining (NHEJ), thereby promoting the homologous recombination (HR)-mediated repair of DSBs during the S/G2 phases of the cell cycle. Mediates the activation of the ATM- and CHEK2-dependent DNA damage responses thus preventing premature entry of cells into mitosis following the induction of DNA DSBs. Remodels chromatin by evicting histones from chromatin flanking DSBs, limiting RIF1 accumulation at DSBs thereby promoting BRCA1-mediated HR. Required for stable recruitment of ELOA and CUL5 to DNA damage sites. Also involved in UV-induced translocation of ERCC8 to the nuclear matrix. Essential for neuronal differentiation and neuritogenesis; regulates transcription and chromatin remodeling activities required during neurogenesis. This Mus musculus (Mouse) protein is DNA excision repair protein ERCC-6 (Ercc6).